Consider the following 643-residue polypeptide: Probable extracellular metalloproteinase 4 (643 aa).

The first 18 residues, 1–18 (MHGLLLAGLLALPLNVFA), serve as a signal peptide directing secretion. Residues 19-254 (HPTESHSSGV…VHSVVDYVSA (236 aa)) constitute a propeptide that is removed on maturation. The interval 49–69 (SDAVPKQDGESFTTSSTGDDN) is disordered. Polar residues predominate over residues 58–69 (ESFTTSSTGDDN). Residues asparagine 271 and asparagine 420 are each glycosylated (N-linked (GlcNAc...) asparagine). Histidine 437 contributes to the Zn(2+) binding site. Glutamate 438 is a catalytic residue. Histidine 441 is a binding site for Zn(2+). N-linked (GlcNAc...) asparagine glycosylation is found at asparagine 603 and asparagine 629.

Belongs to the peptidase M36 family. It depends on Zn(2+) as a cofactor.

Its subcellular location is the secreted. In terms of biological role, secreted metalloproteinase probably acting as a virulence factor. The polypeptide is Probable extracellular metalloproteinase 4 (MEP4) (Trichophyton verrucosum (strain HKI 0517)).